The primary structure comprises 369 residues: Biglycan (369 aa).

The N-terminal stretch at 1–16 (MCPLWLLTLLLALSQA) is a signal peptide. Positions 17–37 (LPFEQKGFWDFTLDDGLLMMN) are excised as a propeptide. O-linked (Xyl...) (glycosaminoglycan) serine glycans are attached at residues Ser-42 and Ser-48. Disulfide bonds link Cys-64–Cys-70 and Cys-68–Cys-77. LRR repeat units follow at residues 83 to 103 (KTVP…NNDI), 104 to 127 (SELR…NNKI), 128 to 151 (SKIH…KNHL), 152 to 172 (VEIP…DNRI), 173 to 196 (RKVP…GNPL), 197 to 221 (ENSG…EAKL), 222 to 242 (TGIP…HNKI), 243 to 266 (QAIE…HNQI), 267 to 290 (RMIE…NNKL), 291 to 313 (SRVP…SNNI), 314 to 343 (TKVG…NNPV), and 344 to 369 (PYWE…NYKK). N-linked (GlcNAc...) asparagine glycans are attached at residues Asn-271 and Asn-312. A disulfide bond links Cys-322 and Cys-355.

It belongs to the small leucine-rich proteoglycan (SLRP) family. SLRP class I subfamily. Post-translationally, the two attached glycosaminoglycan chains can be either chondroitin sulfate or dermatan sulfate. As to expression, found in several connective tissues, especially in articular cartilages.

The protein resides in the secreted. Its subcellular location is the extracellular space. It localises to the extracellular matrix. Its function is as follows. May be involved in collagen fiber assembly. This chain is Biglycan (Bgn), found in Mus musculus (Mouse).